Consider the following 140-residue polypeptide: Nucleoside diphosphate kinase (140 aa).

ATP-binding residues include Lys-11, Phe-59, Arg-87, Thr-93, Arg-104, and Asn-114. The active-site Pros-phosphohistidine intermediate is the His-117.

It belongs to the NDK family. Homotetramer. The cofactor is Mg(2+).

It localises to the cytoplasm. The catalysed reaction is a 2'-deoxyribonucleoside 5'-diphosphate + ATP = a 2'-deoxyribonucleoside 5'-triphosphate + ADP. It catalyses the reaction a ribonucleoside 5'-diphosphate + ATP = a ribonucleoside 5'-triphosphate + ADP. Its function is as follows. Major role in the synthesis of nucleoside triphosphates other than ATP. The ATP gamma phosphate is transferred to the NDP beta phosphate via a ping-pong mechanism, using a phosphorylated active-site intermediate. The polypeptide is Nucleoside diphosphate kinase (Paracoccus denitrificans (strain Pd 1222)).